The sequence spans 600 residues: Myelin expression factor 2 (600 aa).

The segment at 1 to 101 is disordered; sequence MADANKAEVP…GEKKGPNRNR (101 aa). At T13 the chain carries Phosphothreonine. At S17 the chain carries Phosphoserine. Residues 27–42 are compositionally biased toward basic and acidic residues; the sequence is GEPRREPHPAEAEKQQ. K53 participates in a covalent cross-link: Glycyl lysine isopeptide (Lys-Gly) (interchain with G-Cter in SUMO2). Composition is skewed to basic and acidic residues over residues 54–72 and 83–96; these read MEND…EKST and YSKD…EKKG. RRM domains are found at residues 100 to 178 and 233 to 310; these read NRVF…EDPD and STIF…MDDK. At R406 the chain carries Omega-N-methylarginine. S431 bears the Phosphoserine mark. Positions 523–599 constitute an RRM 3 domain; the sequence is NQIFVRNLPF…REIDVRLDRN (77 aa).

In terms of assembly, monomer.

It localises to the nucleus. Its function is as follows. Transcriptional repressor of the myelin basic protein gene (MBP). Binds to the proximal MB1 element 5'-TTGTCC-3' of the MBP promoter. Its binding to MB1 and function are inhibited by PURA. This Homo sapiens (Human) protein is Myelin expression factor 2 (MYEF2).